We begin with the raw amino-acid sequence, 279 residues long: MSPARRCRGMRAAVAASVGLSEGPAGSRSGRLFRPPSPAPAAPGARLLRLPGSGAVQAASPERAGWTEALRAAVAELRAGAVVAVPTDTLYGLACAASCSAALRAVYRLKGRSEAKPLAVCLGRVADVYRYCRVRVPEGLLKDLLPGPVTLVMERSEELNKDLNPFTPLVGIRIPDHAFMQDLAQMFEGPLALTSANLSSQASSLNVEEFQDLWPQLSLVIDGGQIGDGQSPECRLGSTVVDLSVPGKFGIIRPGCALESTTAILQQKYGLLPSHASYL.

The transit peptide at 1–55 (MSPARRCRGMRAAVAASVGLSEGPAGSRSGRLFRPPSPAPAAPGARLLRLPGSGA) directs the protein to the mitochondrion. Residues 21–41 (SEGPAGSRSGRLFRPPSPAPA) are disordered. Ser-60 carries the phosphoserine modification. The YrdC-like domain occupies 67–257 (TEALRAAVAE…KFGIIRPGCA (191 aa)).

This sequence belongs to the SUA5 family. As to quaternary structure, interacts with RSC1A1. Ubiquitously expressed.

The protein resides in the cytoplasm. Its subcellular location is the mitochondrion. It is found in the cell membrane. It catalyses the reaction L-threonine + hydrogencarbonate + ATP = L-threonylcarbamoyladenylate + diphosphate + H2O. Functionally, cytoplasmic and mitochondrial threonylcarbamoyl-AMP synthase required for the formation of a threonylcarbamoyl group on adenosine at position 37 (t(6)A37) in tRNAs that read codons beginning with adenine. Catalyzes the conversion of L-threonine, HCO(3)(-)/CO(2) and ATP to give threonylcarbamoyl-AMP (TC-AMP) as the acyladenylate intermediate, with the release of diphosphate. Participates in t(6)A37 formation in cytoplasmic and mitochondrial tRNAs. May regulate the activity of some transporters. This is Threonylcarbamoyl-AMP synthase from Homo sapiens (Human).